A 558-amino-acid chain; its full sequence is N-acetylglucosamine-6-O-sulfatase (558 aa).

Ser-101 bears the 3-oxoalanine (Ser) mark.

This sequence belongs to the sulfatase family. In terms of processing, the conversion to 3-oxoalanine (also known as C-formylglycine, FGly), of a serine or cysteine residue in prokaryotes and of a cysteine residue in eukaryotes, is critical for catalytic activity.

Functionally, exosulfatase involved in the degradation of the glycosaminoglycan (GAG) heparan sulfate (HS). Catalyzes the hydrolysis of the 6-sulfate groups of the N-acetyl-D-glucosamine 6-sulfate units. GAG-specific sulfatases play a key role in the persistence of the major human gut symbiont B.thetaiotaomicron in the host gastrointestinal tract. In Bacteroides thetaiotaomicron (strain ATCC 29148 / DSM 2079 / JCM 5827 / CCUG 10774 / NCTC 10582 / VPI-5482 / E50), this protein is N-acetylglucosamine-6-O-sulfatase.